We begin with the raw amino-acid sequence, 545 residues long: Ubiquitin carboxyl-terminal hydrolase 17-like protein C (545 aa).

Positions 51–348 constitute a USP domain; the sequence is CGLQNTGNSC…NAYVLFYVQQ (298 aa). The active-site Nucleophile is the C60. H307 serves as the catalytic Proton acceptor. Disordered regions lie at residues 368–442 and 489–539; these read DPEY…QKLG and WGRD…KQGQ. The span at 374 to 385 shows a compositional bias: basic residues; it reads KKSRRKKHKKKS. 2 stretches are compositionally biased toward basic and acidic residues: residues 393–404 and 489–505; these read EPCKNREKRATK and WGRD…HNAD. Positions 508 to 519 are enriched in polar residues; the sequence is LTSQDPVNTGQL. A compositionally biased stretch (basic residues) spans 524-537; sequence GRRRSKKGKNKNKQ.

The protein belongs to the peptidase C19 family. USP17 subfamily. In terms of tissue distribution, expressed in T cells.

The protein resides in the nucleus. The protein localises to the endoplasmic reticulum. The enzyme catalyses Thiol-dependent hydrolysis of ester, thioester, amide, peptide and isopeptide bonds formed by the C-terminal Gly of ubiquitin (a 76-residue protein attached to proteins as an intracellular targeting signal).. Its function is as follows. Deubiquitinating enzyme that removes conjugated ubiquitin from specific proteins to regulate different cellular processes. Important for preimplantation stage embryonic development. The polypeptide is Ubiquitin carboxyl-terminal hydrolase 17-like protein C (Mus musculus (Mouse)).